A 419-amino-acid polypeptide reads, in one-letter code: UDP-N-acetylglucosamine 1-carboxyvinyltransferase 1 (419 aa).

A phosphoenolpyruvate-binding site is contributed by 22-23 (KN). Arg-92 provides a ligand contact to UDP-N-acetyl-alpha-D-glucosamine. The Proton donor role is filled by Cys-116. 2-(S-cysteinyl)pyruvic acid O-phosphothioketal is present on Cys-116. UDP-N-acetyl-alpha-D-glucosamine is bound by residues 121–125 (RPIDL), Asp-306, and Ile-328.

It belongs to the EPSP synthase family. MurA subfamily.

It is found in the cytoplasm. It carries out the reaction phosphoenolpyruvate + UDP-N-acetyl-alpha-D-glucosamine = UDP-N-acetyl-3-O-(1-carboxyvinyl)-alpha-D-glucosamine + phosphate. It participates in cell wall biogenesis; peptidoglycan biosynthesis. Its function is as follows. Cell wall formation. Adds enolpyruvyl to UDP-N-acetylglucosamine. This Streptococcus agalactiae serotype Ia (strain ATCC 27591 / A909 / CDC SS700) protein is UDP-N-acetylglucosamine 1-carboxyvinyltransferase 1.